We begin with the raw amino-acid sequence, 261 residues long: Homeobox protein engrailed-2b (261 aa).

Basic and acidic residues-rich tracts occupy residues 1–21 (MEEN…DESN), 53–72 (GRRK…RENR), and 100–116 (KKTD…RAET). 3 disordered regions span residues 1-24 (MEEN…NRAI), 53-125 (GRRK…SSDS), and 152-176 (DRPS…KRPR). The homeobox DNA-binding region spans 172-231 (DKRPRTAFTAEQLQRLKNEFQNNRYLTEQRRQALAQELGLNESQIKIWFQNKRAKIKKAT).

This sequence belongs to the engrailed homeobox family.

The protein localises to the nucleus. The protein is Homeobox protein engrailed-2b (eng2b) of Danio rerio (Zebrafish).